Reading from the N-terminus, the 185-residue chain is ATP synthase subunit b, chloroplastic (185 aa).

Residues 27 to 49 traverse the membrane as a helical segment; that stretch reads LATNPINLSVVLGVLIFFGKGVL.

It belongs to the ATPase B chain family. F-type ATPases have 2 components, F(1) - the catalytic core - and F(0) - the membrane proton channel. F(1) has five subunits: alpha(3), beta(3), gamma(1), delta(1), epsilon(1). F(0) has four main subunits: a(1), b(1), b'(1) and c(10-14). The alpha and beta chains form an alternating ring which encloses part of the gamma chain. F(1) is attached to F(0) by a central stalk formed by the gamma and epsilon chains, while a peripheral stalk is formed by the delta, b and b' chains.

Its subcellular location is the plastid. It localises to the chloroplast thylakoid membrane. F(1)F(0) ATP synthase produces ATP from ADP in the presence of a proton or sodium gradient. F-type ATPases consist of two structural domains, F(1) containing the extramembraneous catalytic core and F(0) containing the membrane proton channel, linked together by a central stalk and a peripheral stalk. During catalysis, ATP synthesis in the catalytic domain of F(1) is coupled via a rotary mechanism of the central stalk subunits to proton translocation. Functionally, component of the F(0) channel, it forms part of the peripheral stalk, linking F(1) to F(0). In Vitis vinifera (Grape), this protein is ATP synthase subunit b, chloroplastic.